The chain runs to 443 residues: Proline--tRNA ligase (443 aa).

Belongs to the class-II aminoacyl-tRNA synthetase family. ProS type 2 subfamily. Homodimer.

The protein localises to the cytoplasm. The catalysed reaction is tRNA(Pro) + L-proline + ATP = L-prolyl-tRNA(Pro) + AMP + diphosphate. Catalyzes the attachment of proline to tRNA(Pro) in a two-step reaction: proline is first activated by ATP to form Pro-AMP and then transferred to the acceptor end of tRNA(Pro). This is Proline--tRNA ligase from Methylobacterium nodulans (strain LMG 21967 / CNCM I-2342 / ORS 2060).